The chain runs to 91 residues: Apolipoprotein C-III (91 aa).

A signal peptide spans 1 to 20 (MQPRVLLAVTLLALLVSARA). Position 63 is a methionine sulfoxide (M63). The interval 68 to 91 (DSMKGYWTSLIGRLSGFLDSTPSS) is lipid-binding.

The protein belongs to the apolipoprotein C3 family.

It localises to the secreted. Functionally, component of triglyceride-rich very low density lipoproteins (VLDL) and high density lipoproteins (HDL) in plasma. Plays a multifaceted role in triglyceride homeostasis. Intracellularly, promotes hepatic very low density lipoprotein 1 (VLDL1) assembly and secretion; extracellularly, attenuates hydrolysis and clearance of triglyceride-rich lipoproteins (TRLs). Impairs the lipolysis of TRLs by inhibiting lipoprotein lipase and the hepatic uptake of TRLs by remnant receptors. Formed of several curved helices connected via semiflexible hinges, so that it can wrap tightly around the curved micelle surface and easily adapt to the different diameters of its natural binding partners. The chain is Apolipoprotein C-III (APOC3) from Cavia porcellus (Guinea pig).